The chain runs to 90 residues: Small ribosomal subunit protein uS15 (90 aa).

This sequence belongs to the universal ribosomal protein uS15 family. As to quaternary structure, part of the 30S ribosomal subunit. Forms a bridge to the 50S subunit in the 70S ribosome, contacting the 23S rRNA.

In terms of biological role, one of the primary rRNA binding proteins, it binds directly to 16S rRNA where it helps nucleate assembly of the platform of the 30S subunit by binding and bridging several RNA helices of the 16S rRNA. Functionally, forms an intersubunit bridge (bridge B4) with the 23S rRNA of the 50S subunit in the ribosome. The polypeptide is Small ribosomal subunit protein uS15 (Campylobacter concisus (strain 13826)).